The chain runs to 430 residues: Neuropeptide FF receptor 1 (430 aa).

A disordered region spans residues 1 to 20 (MEGEPSQPPNSSWPLSQNGT). Topologically, residues 1-43 (MEGEPSQPPNSSWPLSQNGTNTEATPATNLTFSSYYQHTSPVA) are extracellular. The span at 9–20 (PNSSWPLSQNGT) shows a compositional bias: polar residues. 3 N-linked (GlcNAc...) asparagine glycosylation sites follow: Asn-10, Asn-18, and Asn-29. Residues 44–64 (AMFIVAYALIFLLCMVGNTLV) traverse the membrane as a helical segment. The Cytoplasmic portion of the chain corresponds to 65–80 (CFIVLKNRHMHTVTNM). The helical transmembrane segment at 81 to 101 (FILNLAVSDLLVGIFCMPTTL) threads the bilayer. Residues 102–117 (VDNLITGWPFDNATCK) lie on the Extracellular side of the membrane. Residue Asn-113 is glycosylated (N-linked (GlcNAc...) asparagine). A disulfide bridge links Cys-116 with Cys-203. Residues 118–138 (MSGLVQGMSVSASVFTLVAIA) traverse the membrane as a helical segment. Residues 139–158 (VERFRCIVHPFREKLTLRKA) are Cytoplasmic-facing. Residues 159-179 (LVTIAVIWALALLIMCPSAVT) traverse the membrane as a helical segment. Residues 180–214 (LTVTREEHHFMVDARNRSYPLYSCWEAWPEKGMRR) are Extracellular-facing. Asn-195 carries N-linked (GlcNAc...) asparagine glycosylation. The chain crosses the membrane as a helical span at residues 215–235 (VYTTVLFSHIYLAPLALIVVM). The Cytoplasmic portion of the chain corresponds to 236–271 (YARIARKLCQAPGPAPGGEEAADPRASRRRARVVHM). Residues 272–292 (LVMVALFFTLSWLPLWALLLL) traverse the membrane as a helical segment. Residues 293-307 (IDYGQLSAPQLHLVT) lie on the Extracellular side of the membrane. The chain crosses the membrane as a helical span at residues 308–328 (VYAFPFAHWLAFFNSSANPII). Topologically, residues 329 to 430 (YGYFNENFRR…LPLTIPAWDI (102 aa)) are cytoplasmic. Over residues 379-404 (SDSGLPSESGPSSGAPRPGRLPLRNG) the composition is skewed to low complexity. The disordered stretch occupies residues 379-413 (SDSGLPSESGPSSGAPRPGRLPLRNGRVAHHGLPR).

The protein belongs to the G-protein coupled receptor 1 family.

It is found in the cell membrane. Functionally, receptor for NPAF (A-18-F-amide) and NPFF (F-8-F-amide) neuropeptides, also known as morphine-modulating peptides. Can also be activated by a variety of naturally occurring or synthetic FMRF-amide like ligands. This receptor mediates its action by association with G proteins that activate a phosphatidylinositol-calcium second messenger system. In Homo sapiens (Human), this protein is Neuropeptide FF receptor 1.